The chain runs to 255 residues: U2 small nuclear ribonucleoprotein A' (255 aa).

LRR repeat units lie at residues 20-41 (RDRE…GATL), 43-64 (QFDA…PLLR), 65-86 (RLKT…LDQA), and 89-110 (CLTE…DPLA). The LRRCT domain occupies 123-161 (NPVTNKKHYRLYVIYKVPQVRVLDFQKVKLKERQEAEKM). The residue at position 172 (Lys-172) is an N6-acetyllysine; alternate. Residue Lys-172 forms a Glycyl lysine isopeptide (Lys-Gly) (interchain with G-Cter in SUMO2); alternate linkage. The interval 174-201 (IARRSKTFNPGAGLPTDKKKGGPSPGDV) is disordered. 2 positions are modified to phosphoserine: Ser-178 and Ser-197. Residue Lys-221 forms a Glycyl lysine isopeptide (Lys-Gly) (interchain with G-Cter in SUMO2) linkage. Positions 222 to 255 (GLLQSGQIPGRERRSGPTDDGEEEMEEDTVTNGS) are disordered. Phosphoserine is present on residues Ser-236 and Ser-255. Residues 240–255 (DDGEEEMEEDTVTNGS) are compositionally biased toward acidic residues.

This sequence belongs to the U2 small nuclear ribonucleoprotein A family. In terms of assembly, identified in the spliceosome B complex. Identified in the spliceosome C complex. Found in a pre-mRNA splicing complex with SFRS4, SFRS5, SNRNP70, SNRPA1, SRRM1 and SRRM2. Found in a pre-mRNA exonic splicing enhancer (ESE) complex with SNRNP70, SNRPA1, SRRM1 and TRA2B. Contributes to the binding of stem loop IV of U2 snRNA with SNRPB2.

Its subcellular location is the nucleus. Involved in pre-mRNA splicing as component of the spliceosome. Associated with sn-RNP U2, where it contributes to the binding of stem loop IV of U2 snRNA. In Homo sapiens (Human), this protein is U2 small nuclear ribonucleoprotein A' (SNRPA1).